A 432-amino-acid polypeptide reads, in one-letter code: Glutamyl-tRNA reductase (432 aa).

Substrate contacts are provided by residues 55-58 (TCNR), Ser-114, 119-121 (ETQ), and Gln-125. Cys-56 (nucleophile) is an active-site residue. 194–199 (GAGEMI) is an NADP(+) binding site.

It belongs to the glutamyl-tRNA reductase family. As to quaternary structure, homodimer.

It catalyses the reaction (S)-4-amino-5-oxopentanoate + tRNA(Glu) + NADP(+) = L-glutamyl-tRNA(Glu) + NADPH + H(+). It functions in the pathway porphyrin-containing compound metabolism; protoporphyrin-IX biosynthesis; 5-aminolevulinate from L-glutamyl-tRNA(Glu): step 1/2. Its function is as follows. Catalyzes the NADPH-dependent reduction of glutamyl-tRNA(Glu) to glutamate 1-semialdehyde (GSA). This is Glutamyl-tRNA reductase from Burkholderia cenocepacia (strain ATCC BAA-245 / DSM 16553 / LMG 16656 / NCTC 13227 / J2315 / CF5610) (Burkholderia cepacia (strain J2315)).